Consider the following 64-residue polypeptide: MALPKYKTSRANTHSRRANWKATAAATVNCPNCGAPALPHMACPSCGNYRGRTYRSAIQPAHTK.

Belongs to the bacterial ribosomal protein bL32 family.

This Bifidobacterium longum (strain DJO10A) protein is Large ribosomal subunit protein bL32.